Reading from the N-terminus, the 237-residue chain is MEESVNPTIQLGPVTFNLTLLAMSLLAVLLVFAFVYWASRKMTLKPSGKQNALEYLYDFVIDFTKGNIGSKYMKNYSLFLFSLFLFLVVANNLGLMAKLQTTSGENLWTSPTANIAFDLSMSFLITLICHVEGIRRRGFKKYLKAFVTPGFMTPMNILEEFTNFASLALRIYGNIFAGEVLSGLLVTLSHQAVFYYPLAFGLNLVWTAFSVFISCVQAYVFTMLTSMYLGKKINGEE.

5 consecutive transmembrane segments (helical) span residues 18-38 (LTLL…VYWA), 77-97 (SLFL…GLMA), 114-134 (NIAF…VEGI), 167-187 (LALR…LLVT), and 208-230 (AFSV…MYLG).

Belongs to the ATPase A chain family. As to quaternary structure, F-type ATPases have 2 components, CF(1) - the catalytic core - and CF(0) - the membrane proton channel. CF(1) has five subunits: alpha(3), beta(3), gamma(1), delta(1), epsilon(1). CF(0) has three main subunits: a(1), b(2) and c(9-12). The alpha and beta chains form an alternating ring which encloses part of the gamma chain. CF(1) is attached to CF(0) by a central stalk formed by the gamma and epsilon chains, while a peripheral stalk is formed by the delta and b chains.

It localises to the cell membrane. In terms of biological role, key component of the proton channel; it plays a direct role in the translocation of protons across the membrane. In Streptococcus gordonii (strain Challis / ATCC 35105 / BCRC 15272 / CH1 / DL1 / V288), this protein is ATP synthase subunit a.